The chain runs to 293 residues: Ribosomal RNA small subunit methyltransferase H (293 aa).

S-adenosyl-L-methionine is bound by residues Gly32–His34, Asp51, Phe78, Asp99, and Gln106. Residues Ser272–Ile293 are disordered.

The protein belongs to the methyltransferase superfamily. RsmH family.

It is found in the cytoplasm. The catalysed reaction is cytidine(1402) in 16S rRNA + S-adenosyl-L-methionine = N(4)-methylcytidine(1402) in 16S rRNA + S-adenosyl-L-homocysteine + H(+). Specifically methylates the N4 position of cytidine in position 1402 (C1402) of 16S rRNA. The protein is Ribosomal RNA small subunit methyltransferase H of Sulfurihydrogenibium sp. (strain YO3AOP1).